An 88-amino-acid polypeptide reads, in one-letter code: Small ribosomal subunit protein bS20 (88 aa).

The segment at Met-1–Met-27 is disordered.

It belongs to the bacterial ribosomal protein bS20 family.

In terms of biological role, binds directly to 16S ribosomal RNA. The chain is Small ribosomal subunit protein bS20 from Shewanella sediminis (strain HAW-EB3).